Here is a 267-residue protein sequence, read N- to C-terminus: MQLIRSSDYGFWLLSQGSHIHLVNNYLPEGRAEDFHLQGKKGMVIGELDRQPLWLVEEQPNDTRAYFDLRDQLYLPERTFNLLNRGVELNHFFKTHQFCGKCGDKTMQTEDEWAVQCTNEECNYRTYPVICPSIIVAIRRGKEILLANHRRHAPKYGKGGMYTTLAGFVEVGESFEQTIHREVFEETGIKVKNIRYFGSQPWAFPNSQMVGFLADYESGEIRLQEEEIADAKWFRYDEPYPEFPEKGTIARALIEATLKLCAEHQDK.

Substrate is bound at residue arginine 70. Zn(2+) contacts are provided by cysteine 99 and cysteine 102. Glutamate 112 is a binding site for substrate. Positions 117 and 122 each coordinate Zn(2+). Tyrosine 127 lines the substrate pocket. Residues 128 to 257 (PVICPSIIVA…TIARALIEAT (130 aa)) form the Nudix hydrolase domain. A divalent metal cation contacts are provided by alanine 166, glutamate 182, and glutamate 186. Residues 167–188 (GFVEVGESFEQTIHREVFEETG) carry the Nudix box motif. A substrate-binding site is contributed by 200-207 (QPWAFPNS). Position 227 (glutamate 227) interacts with a divalent metal cation. Alanine 250 serves as a coordination point for substrate.

The protein belongs to the Nudix hydrolase family. NudC subfamily. In terms of assembly, homodimer. Mg(2+) is required as a cofactor. It depends on Mn(2+) as a cofactor. The cofactor is Zn(2+).

The catalysed reaction is a 5'-end NAD(+)-phospho-ribonucleoside in mRNA + H2O = a 5'-end phospho-adenosine-phospho-ribonucleoside in mRNA + beta-nicotinamide D-ribonucleotide + 2 H(+). It catalyses the reaction NAD(+) + H2O = beta-nicotinamide D-ribonucleotide + AMP + 2 H(+). The enzyme catalyses NADH + H2O = reduced beta-nicotinamide D-ribonucleotide + AMP + 2 H(+). Functionally, mRNA decapping enzyme that specifically removes the nicotinamide adenine dinucleotide (NAD) cap from a subset of mRNAs by hydrolyzing the diphosphate linkage to produce nicotinamide mononucleotide (NMN) and 5' monophosphate mRNA. The NAD-cap is present at the 5'-end of some mRNAs and stabilizes RNA against 5'-processing. Has preference for mRNAs with a 5'-end purine. Catalyzes the hydrolysis of a broad range of dinucleotide pyrophosphates. In Mannheimia succiniciproducens (strain KCTC 0769BP / MBEL55E), this protein is NAD-capped RNA hydrolase NudC.